A 284-amino-acid polypeptide reads, in one-letter code: Sulfotransferase 2A6 (284 aa).

43–48 (KSGTNW) provides a ligand contact to 3'-phosphoadenylyl sulfate. The active-site Proton acceptor is His98. 3'-phosphoadenylyl sulfate is bound by residues Arg120, Ser128, Tyr183, 217-222 (SSFQVM), and 246-248 (RNG).

It belongs to the sulfotransferase 1 family. As to quaternary structure, oligomer. Liver, exhibiting a sex-dependent spatial localization in the lobule of the liver.

It localises to the cytoplasm. The protein localises to the cytosol. The enzyme catalyses an alcohol + 3'-phosphoadenylyl sulfate = an alkyl sulfate + adenosine 3',5'-bisphosphate + H(+). It catalyses the reaction glycolithocholate + 3'-phosphoadenylyl sulfate = sulfoglycolithocholate + adenosine 3',5'-bisphosphate + H(+). The catalysed reaction is taurolithocholate + 3'-phosphoadenylyl sulfate = taurolithocholate 3-sulfate + adenosine 3',5'-bisphosphate + H(+). It carries out the reaction 3beta-hydroxyandrost-5-en-17-one + 3'-phosphoadenylyl sulfate = dehydroepiandrosterone 3-sulfate + adenosine 3',5'-bisphosphate + H(+). The enzyme catalyses 3beta-hydroxy-5-cholenate + 3'-phosphoadenylyl sulfate = 3beta-sulfo-5-cholenate + adenosine 3',5'-bisphosphate + H(+). It catalyses the reaction deoxycholate + 3'-phosphoadenylyl sulfate = 3alpha-sulfodeoxycholate + adenosine 3',5'-bisphosphate + H(+). The catalysed reaction is glycodeoxycholate + 3'-phosphoadenylyl sulfate = 3alpha-sulfoglycodeoxycholate + adenosine 3',5'-bisphosphate + H(+). It carries out the reaction taurodeoxycholate + 3'-phosphoadenylyl sulfate = 3alpha-sulfotaurodeoxycholate + adenosine 3',5'-bisphosphate + H(+). Its function is as follows. Sulfotransferase that utilizes 3'-phospho-5'-adenylyl sulfate (PAPS) as sulfonate donor to catalyze the sulfonation of the hydroxyl group of hydroxysteroids and bile acids. Prefered substrates are dehydroepiandrosterone (DHEA, also known as 3beta-hydroxyandrost-5-en-17-one) and 3beta-hydroxy-5-cholenoate, but can also catalyze deoxycholate and its conjugates, and lithocholate conjugates, in vitro. The protein is Sulfotransferase 2A6 of Rattus norvegicus (Rat).